The following is a 239-amino-acid chain: Putative ankyrin repeat protein RBE_0489 (239 aa).

3 ANK repeats span residues 23–52 (ISSR…SPNA), 80–109 (GIDT…FINA), and 113–143 (FGFT…SLTL).

This is Putative ankyrin repeat protein RBE_0489 from Rickettsia bellii (strain RML369-C).